A 259-amino-acid polypeptide reads, in one-letter code: Phosphatidate cytidylyltransferase (259 aa).

The next 7 helical transmembrane spans lie at L31 to I51, P69 to L89, F103 to I123, Y129 to G149, F170 to L190, F193 to I213, and F236 to N256.

This sequence belongs to the CDS family.

It is found in the cell membrane. It carries out the reaction a 1,2-diacyl-sn-glycero-3-phosphate + CTP + H(+) = a CDP-1,2-diacyl-sn-glycerol + diphosphate. Its pathway is phospholipid metabolism; CDP-diacylglycerol biosynthesis; CDP-diacylglycerol from sn-glycerol 3-phosphate: step 3/3. The polypeptide is Phosphatidate cytidylyltransferase (cdsA) (Aquifex aeolicus (strain VF5)).